The chain runs to 140 residues: Extracellular globin-1 (140 aa).

The Globin domain maps to 1–140 (ECDVLERFKV…YDFIASGIKP (140 aa)). Cysteines 2 and 130 form a disulfide. H93 contacts heme b.

Belongs to the globin family. In terms of assembly, the giant hemoglobins of worms are formed of a monomeric subunit and a disulfide-bonded trimer. This subunit is monomeric.

It localises to the secreted. This chain is Extracellular globin-1, found in Metaphire hilgendorfi (Earthworm).